We begin with the raw amino-acid sequence, 174 residues long: Endoribonuclease YbeY (174 aa).

His-129, His-133, and His-139 together coordinate Zn(2+).

The protein belongs to the endoribonuclease YbeY family. The cofactor is Zn(2+).

The protein localises to the cytoplasm. In terms of biological role, single strand-specific metallo-endoribonuclease involved in late-stage 70S ribosome quality control and in maturation of the 3' terminus of the 16S rRNA. This is Endoribonuclease YbeY from Lactobacillus acidophilus (strain ATCC 700396 / NCK56 / N2 / NCFM).